Reading from the N-terminus, the 350-residue chain is MEDLVVELGERSYPIIIKKGLINEVNLEIQKVFKGKKIFILTDKNVGSHYGDRIKSCLIKSGYDVKLMELEPGEETKAFSTLPLIYNELLDFKITRSDLIITLGGGVIGDLGGFAASTFLRGVDFVQIPTSLLAQVDSSVGGKVAVDLERGKNLVGSFYHPKLVLIDPNVLETLSERFFRDGMAEVIKYGCIKDKEFFYFLKSLKNKEEVMNNIEKIIHKCCFIKKCVVENDEKDTGERMLLNFGHTLGHAIETYYNFKKFTHGEAVAIGMYEISKIAENKGLTDQGVSEEIREILVQYNLPYEVEIDDSSEVLDTIALDKKNIDNVLKVVLLRNIGESYLEKTNVEFFS.

NAD(+) is bound by residues 106–110, 130–131, K143, and K152; these read GVIGD and TS. 3 residues coordinate Zn(2+): E185, H246, and H263.

It belongs to the sugar phosphate cyclases superfamily. Dehydroquinate synthase family. The cofactor is Co(2+). Requires Zn(2+) as cofactor. It depends on NAD(+) as a cofactor.

The protein localises to the cytoplasm. The enzyme catalyses 7-phospho-2-dehydro-3-deoxy-D-arabino-heptonate = 3-dehydroquinate + phosphate. It participates in metabolic intermediate biosynthesis; chorismate biosynthesis; chorismate from D-erythrose 4-phosphate and phosphoenolpyruvate: step 2/7. Catalyzes the conversion of 3-deoxy-D-arabino-heptulosonate 7-phosphate (DAHP) to dehydroquinate (DHQ). The protein is 3-dehydroquinate synthase of Clostridium beijerinckii (strain ATCC 51743 / NCIMB 8052) (Clostridium acetobutylicum).